A 22-amino-acid chain; its full sequence is Superoxide dismutase [Cu-Zn] (22 aa).

The protein belongs to the Cu-Zn superoxide dismutase family. As to quaternary structure, homodimer. It depends on Cu cation as a cofactor. Requires Zn(2+) as cofactor.

The protein resides in the cytoplasm. The enzyme catalyses 2 superoxide + 2 H(+) = H2O2 + O2. Its function is as follows. Destroys radicals which are normally produced within the cells and which are toxic to biological systems. The chain is Superoxide dismutase [Cu-Zn] from Hordeum vulgare (Barley).